A 172-amino-acid chain; its full sequence is 3-hydroxydecanoyl-[acyl-carrier-protein] dehydratase (172 aa).

The active site involves H70.

The protein belongs to the thioester dehydratase family. FabA subfamily. Homodimer.

It localises to the cytoplasm. It catalyses the reaction a (3R)-hydroxyacyl-[ACP] = a (2E)-enoyl-[ACP] + H2O. The catalysed reaction is (3R)-hydroxydecanoyl-[ACP] = (2E)-decenoyl-[ACP] + H2O. It carries out the reaction (2E)-decenoyl-[ACP] = (3Z)-decenoyl-[ACP]. It participates in lipid metabolism; fatty acid biosynthesis. Its function is as follows. Necessary for the introduction of cis unsaturation into fatty acids. Catalyzes the dehydration of (3R)-3-hydroxydecanoyl-ACP to E-(2)-decenoyl-ACP and then its isomerization to Z-(3)-decenoyl-ACP. Can catalyze the dehydratase reaction for beta-hydroxyacyl-ACPs with saturated chain lengths up to 16:0, being most active on intermediate chain length. This chain is 3-hydroxydecanoyl-[acyl-carrier-protein] dehydratase, found in Xylella fastidiosa (strain M23).